The following is an 811-amino-acid chain: TLR4 interactor with leucine rich repeats (811 aa).

The first 25 residues, methionine 1–serine 25, serve as a signal peptide directing secretion. The region spanning valine 26–serine 57 is the LRRNT domain. The Extracellular portion of the chain corresponds to valine 26 to glutamine 696. 12 LRR repeats span residues valine 61–arginine 81, glutamine 84–lysine 105, arginine 108–proline 129, lysine 132–glycine 153, serine 156–proline 177, asparagine 180–glutamine 201, lysine 204–alanine 223, serine 230–histidine 251, arginine 254–glycine 275, alanine 278–glutamate 298, serine 302–histidine 323, and arginine 326–alanine 347. Asparagine 73 carries N-linked (GlcNAc...) asparagine glycosylation. An LRRCT domain is found at asparagine 359–aspartate 416. An N-linked (GlcNAc...) asparagine glycan is attached at asparagine 411. 2 disordered regions span residues cysteine 414–glycine 460 and arginine 486–arginine 562. The segment covering proline 421–isoleucine 430 has biased composition (polar residues). Low complexity-rich tracts occupy residues proline 440–glycine 460 and glutamine 494–serine 508. The segment covering aspartate 510 to arginine 519 has biased composition (basic and acidic residues). A compositionally biased stretch (polar residues) spans asparagine 524 to aspartate 545. Asparagine 589 carries an N-linked (GlcNAc...) asparagine glycan. A helical membrane pass occupies residues leucine 697–tryptophan 717. The Cytoplasmic segment spans residues glycine 718 to phenylalanine 809. Position 798 is a phosphoserine (serine 798).

In terms of assembly, belongs to the lipopolysaccharide (LPS) receptor, a multi-protein complex containing at least CD14, MD-2 and TLR4. Interacts with TLR4; this interaction is greatly enhanced following LPS stimulation. Interacts with LPS. N-glycolysaled. In terms of tissue distribution, highly expressed in cortical astrocytes and in cerebellar granule neurons.

It is found in the membrane. Functionally, component of the TLR4 signaling complex. Mediates the innate immune response to bacterial lipopolysaccharide (LPS) leading to cytokine secretion and the inflammatory response. The polypeptide is TLR4 interactor with leucine rich repeats (Tril) (Rattus norvegicus (Rat)).